We begin with the raw amino-acid sequence, 427 residues long: Enolase (427 aa).

Gln163 contributes to the (2R)-2-phosphoglycerate binding site. Residue Glu205 is the Proton donor of the active site. Mg(2+) is bound by residues Asp242, Glu285, and Asp312. Lys337, Arg366, Ser367, and Lys388 together coordinate (2R)-2-phosphoglycerate. The active-site Proton acceptor is the Lys337.

The protein belongs to the enolase family. Mg(2+) is required as a cofactor.

The protein resides in the cytoplasm. The protein localises to the secreted. Its subcellular location is the cell surface. The enzyme catalyses (2R)-2-phosphoglycerate = phosphoenolpyruvate + H2O. The protein operates within carbohydrate degradation; glycolysis; pyruvate from D-glyceraldehyde 3-phosphate: step 4/5. Functionally, catalyzes the reversible conversion of 2-phosphoglycerate (2-PG) into phosphoenolpyruvate (PEP). It is essential for the degradation of carbohydrates via glycolysis. This Burkholderia lata (strain ATCC 17760 / DSM 23089 / LMG 22485 / NCIMB 9086 / R18194 / 383) protein is Enolase.